The sequence spans 285 residues: Transmembrane protein 53-B (285 aa).

The helical transmembrane segment at phenylalanine 165 to valine 185 threads the bilayer.

This sequence belongs to the TMEM53 family.

It localises to the nucleus outer membrane. Its function is as follows. Ensures normal bone formation, through the negative regulation of bone morphogenetic protein (BMP) signaling in osteoblast lineage cells by blocking cytoplasm-nucleus translocation of phosphorylated SMAD proteins. This is Transmembrane protein 53-B (tmem53-b) from Xenopus laevis (African clawed frog).